Reading from the N-terminus, the 37-residue chain is Large ribosomal subunit protein bL36 (37 aa).

The protein belongs to the bacterial ribosomal protein bL36 family.

The polypeptide is Large ribosomal subunit protein bL36 (Brevibacillus brevis (strain 47 / JCM 6285 / NBRC 100599)).